A 123-amino-acid polypeptide reads, in one-letter code: Small ribosomal subunit protein uS13 (123 aa).

A disordered region spans residues 97-123; sequence PVRGQRTRSNARTRKGPRPSRIKKKGK. Residues 101-123 are compositionally biased toward basic residues; the sequence is QRTRSNARTRKGPRPSRIKKKGK.

Belongs to the universal ribosomal protein uS13 family. Part of the 30S ribosomal subunit. Forms a loose heterodimer with protein S19. Forms two bridges to the 50S subunit in the 70S ribosome.

Its function is as follows. Located at the top of the head of the 30S subunit, it contacts several helices of the 16S rRNA. In the 70S ribosome it contacts the 23S rRNA (bridge B1a) and protein L5 of the 50S subunit (bridge B1b), connecting the 2 subunits; these bridges are implicated in subunit movement. Contacts the tRNAs in the A and P-sites. This Fervidobacterium nodosum (strain ATCC 35602 / DSM 5306 / Rt17-B1) protein is Small ribosomal subunit protein uS13.